Reading from the N-terminus, the 374-residue chain is N-acetyldiaminopimelate deacetylase (374 aa).

Asp-68 is a catalytic residue. Glu-127 functions as the Proton acceptor in the catalytic mechanism.

This sequence belongs to the peptidase M20A family. N-acetyldiaminopimelate deacetylase subfamily.

The catalysed reaction is N-acetyl-(2S,6S)-2,6-diaminopimelate + H2O = (2S,6S)-2,6-diaminopimelate + acetate. The protein operates within amino-acid biosynthesis; L-lysine biosynthesis via DAP pathway; LL-2,6-diaminopimelate from (S)-tetrahydrodipicolinate (acetylase route): step 3/3. Functionally, catalyzes the conversion of N-acetyl-diaminopimelate to diaminopimelate and acetate. This Shouchella clausii (strain KSM-K16) (Alkalihalobacillus clausii) protein is N-acetyldiaminopimelate deacetylase.